We begin with the raw amino-acid sequence, 1004 residues long: Liprin-beta homolog (1004 aa).

Composition is skewed to low complexity over residues 50-63 and 149-161; these read NGNS…TIGS and SPPS…SSSL. 2 disordered regions span residues 50–122 and 135–161; these read NGNS…RSSR and HRTD…SSSL. 2 coiled-coil regions span residues 280–328 and 364–396; these read CQEL…VNQS and DEMS…ALDE. Disordered regions lie at residues 341–366, 432–497, 528–550, and 648–686; these read HTNG…DDEM, PSDS…GGNQ, NGNE…GKAS, and FSKL…LGTV. Residues 434–453 are compositionally biased toward polar residues; that stretch reads DSMSHSTSFPVSLSSTTSNG. A compositionally biased stretch (low complexity) spans 458–474; sequence STVQSSSSYNSSLSAVS. 2 stretches are compositionally biased toward polar residues: residues 531-541 and 648-684; these read EGANHNYSSAS and FSKL…NHLG. SAM domains are found at residues 698–762, 770–833, and 858–930; these read WRSE…IEED, WDVH…LKKA, and VVRW…LLGP.

Belongs to the liprin family. Liprin-beta subfamily. As to expression, expressed in pharyngeal muscle, particularly posterior bulb, adjacent to the dorsal and ventral cord (but not in ventral cord neurons), and in body wall muscles.

In terms of biological role, involved in the regulation of synaptic function at neuromuscular junctions. Together with the liprin-alpha protein syd-2, may play a role in regulating the structure of the neuronal region, called the active zone, from which synaptic vesicles send neurotransmitter signals across the synapse. Does not seem to be required for neuronal development. May regulate the disassembly of focal adhesions. Does not bind receptor-like tyrosine phosphatases type 2A. This Caenorhabditis elegans protein is Liprin-beta homolog.